The following is a 464-amino-acid chain: ATP synthase subunit beta (464 aa).

Glycine 151–threonine 158 serves as a coordination point for ATP.

This sequence belongs to the ATPase alpha/beta chains family. As to quaternary structure, F-type ATPases have 2 components, CF(1) - the catalytic core - and CF(0) - the membrane proton channel. CF(1) has five subunits: alpha(3), beta(3), gamma(1), delta(1), epsilon(1). CF(0) has three main subunits: a(1), b(2) and c(9-12). The alpha and beta chains form an alternating ring which encloses part of the gamma chain. CF(1) is attached to CF(0) by a central stalk formed by the gamma and epsilon chains, while a peripheral stalk is formed by the delta and b chains.

It localises to the cell membrane. It catalyses the reaction ATP + H2O + 4 H(+)(in) = ADP + phosphate + 5 H(+)(out). In terms of biological role, produces ATP from ADP in the presence of a proton gradient across the membrane. The catalytic sites are hosted primarily by the beta subunits. This chain is ATP synthase subunit beta, found in Bacillus cytotoxicus (strain DSM 22905 / CIP 110041 / 391-98 / NVH 391-98).